The following is a 494-amino-acid chain: Leucine-rich repeat extensin-like protein 4 (494 aa).

The N-terminal stretch at 1 to 25 (MKNNTTQSLLLLLLFFFFFFEISHS) is a signal peptide. N-linked (GlcNAc...) asparagine glycosylation is found at Asn60, Asn94, and Asn106. 9 LRR repeats span residues 121–145 (IRTV…LGLL), 146–168 (TDLA…KFKQ), 169–193 (LKLL…VLHL), 194–217 (PSLK…LFSK), 219–240 (LDAI…FGDS), 242–263 (VSVI…LVEM), 264–287 (KNLN…IGRL), 289–311 (NVTV…VGGM), and 312–335 (VEVE…ICQL). N-linked (GlcNAc...) asparagine glycosylation occurs at Asn289. Asn340 carries an N-linked (GlcNAc...) asparagine glycan. Positions 404–494 (SPPIVALPPP…YASPPPPPFY (91 aa)) are contains the Ser-Pro(4) repeats. Over residues 422 to 479 (PPVYSPPPSPPVFSPPPSPPVYSPPPPPSIHYSSPPPPPVHHSSPPPPSPEFEGPLPP) the composition is skewed to pro residues. Residues 422-482 (PPVYSPPPSP…FEGPLPPVIG (61 aa)) form a disordered region.

Hydroxylated on proline residues in the S-P-P-P-P repeat. Post-translationally, O-glycosylated on hydroxyprolines. In terms of tissue distribution, expressed in roots, stems, leaves and flowers, mostly in vascular tissues.

It localises to the secreted. The protein resides in the cell wall. Functionally, modulates cell morphogenesis by regulating cell wall formation and assembly, and/or growth polarization. The chain is Leucine-rich repeat extensin-like protein 4 (LRX4) from Arabidopsis thaliana (Mouse-ear cress).